A 576-amino-acid polypeptide reads, in one-letter code: Septation ring formation regulator EzrA (576 aa).

Residues 1–7 (MSSTVII) lie on the Extracellular side of the membrane. The helical transmembrane segment at 8 to 26 (LIVVLLVILVAFYAFAILM) threads the bilayer. Over 27 to 576 (RKKTEDRILA…FKNKPTPDYL (550 aa)) the chain is Cytoplasmic. Coiled-coil stretches lie at residues 105–134 (RARE…VAQL) and 277–301 (EQFE…LYAI).

This sequence belongs to the EzrA family.

The protein resides in the cell membrane. In terms of biological role, negative regulator of FtsZ ring formation; modulates the frequency and position of FtsZ ring formation. Inhibits FtsZ ring formation at polar sites. Interacts either with FtsZ or with one of its binding partners to promote depolymerization. This Lactococcus lactis subsp. lactis (strain IL1403) (Streptococcus lactis) protein is Septation ring formation regulator EzrA.